A 202-amino-acid chain; its full sequence is Large ribosomal subunit protein uL4 (202 aa).

The interval 45–71 is disordered; it reads HAQKNRSEVSGSGKKPWRQKGTGRARV.

The protein belongs to the universal ribosomal protein uL4 family. As to quaternary structure, part of the 50S ribosomal subunit.

Functionally, one of the primary rRNA binding proteins, this protein initially binds near the 5'-end of the 23S rRNA. It is important during the early stages of 50S assembly. It makes multiple contacts with different domains of the 23S rRNA in the assembled 50S subunit and ribosome. In terms of biological role, forms part of the polypeptide exit tunnel. This is Large ribosomal subunit protein uL4 from Buchnera aphidicola subsp. Baizongia pistaciae (strain Bp).